The sequence spans 383 residues: Acetylornithine deacetylase (383 aa).

H80 serves as a coordination point for Zn(2+). D82 is a catalytic residue. D112 is a binding site for Zn(2+). E144 is a catalytic residue. The Zn(2+) site is built by E145, E169, and H355.

Belongs to the peptidase M20A family. ArgE subfamily. As to quaternary structure, homodimer. It depends on Zn(2+) as a cofactor. Co(2+) is required as a cofactor. Requires glutathione as cofactor.

It localises to the cytoplasm. It carries out the reaction N(2)-acetyl-L-ornithine + H2O = L-ornithine + acetate. The protein operates within amino-acid biosynthesis; L-arginine biosynthesis; L-ornithine from N(2)-acetyl-L-ornithine (linear): step 1/1. Functionally, catalyzes the hydrolysis of the amide bond of N(2)-acetylated L-amino acids. Cleaves the acetyl group from N-acetyl-L-ornithine to form L-ornithine, an intermediate in L-arginine biosynthesis pathway, and a branchpoint in the synthesis of polyamines. This is Acetylornithine deacetylase from Escherichia coli O8 (strain IAI1).